A 268-amino-acid chain; its full sequence is 4-hydroxy-tetrahydrodipicolinate reductase (268 aa).

NAD(+) contacts are provided by residues 10 to 15 (GASGRM) and aspartate 36. Arginine 37 is a binding site for NADP(+). NAD(+) contacts are provided by residues 99-101 (GTT) and 123-126 (SANM). Residue histidine 156 is the Proton donor/acceptor of the active site. A (S)-2,3,4,5-tetrahydrodipicolinate-binding site is contributed by histidine 157. Lysine 160 serves as the catalytic Proton donor. (S)-2,3,4,5-tetrahydrodipicolinate is bound at residue 166-167 (GT).

This sequence belongs to the DapB family.

Its subcellular location is the cytoplasm. The enzyme catalyses (S)-2,3,4,5-tetrahydrodipicolinate + NAD(+) + H2O = (2S,4S)-4-hydroxy-2,3,4,5-tetrahydrodipicolinate + NADH + H(+). It carries out the reaction (S)-2,3,4,5-tetrahydrodipicolinate + NADP(+) + H2O = (2S,4S)-4-hydroxy-2,3,4,5-tetrahydrodipicolinate + NADPH + H(+). It participates in amino-acid biosynthesis; L-lysine biosynthesis via DAP pathway; (S)-tetrahydrodipicolinate from L-aspartate: step 4/4. Functionally, catalyzes the conversion of 4-hydroxy-tetrahydrodipicolinate (HTPA) to tetrahydrodipicolinate. This chain is 4-hydroxy-tetrahydrodipicolinate reductase, found in Burkholderia thailandensis (strain ATCC 700388 / DSM 13276 / CCUG 48851 / CIP 106301 / E264).